The following is a 333-amino-acid chain: MSSKNEIWKNEALISALKTIEKNYGKEALVVYNEGDDIDHDVISSGSFLIDQAIGIGGYPKGRVVEIFGPESSGKTTLALHAIAEAQKQGEIAAFIDAEHSLDLNYAKKIGVDINSLLVSQPSYGEEALDILETLVKSNSISLIVVDSVAALVPKTELEGEMSDQSIGLQARMMSKALRKLNGVISKSKTTVIFINQLREKIGIMFGNPETTTGGRALKFFSTLRIEVRKGESLIENGIVVANKVKVKVVKNKVAVPFKQTLITIGYDKGIERINEIIELATLYNILDKSGVWYSYEKEKIGQGKNAVKEWLNKNPDKLSKIEFELKEFIEKS.

Gly69–Thr76 is a binding site for ATP.

Belongs to the RecA family.

The protein localises to the cytoplasm. Can catalyze the hydrolysis of ATP in the presence of single-stranded DNA, the ATP-dependent uptake of single-stranded DNA by duplex DNA, and the ATP-dependent hybridization of homologous single-stranded DNAs. It interacts with LexA causing its activation and leading to its autocatalytic cleavage. The protein is Protein RecA of Mesoplasma florum (strain ATCC 33453 / NBRC 100688 / NCTC 11704 / L1) (Acholeplasma florum).